The primary structure comprises 227 residues: Isopentenyl-diphosphate Delta-isomerase 1 (227 aa).

K36 is a binding site for substrate. Residues H40 and H51 each coordinate Mg(2+). Residues 49–199 (LLHRAFSVFL…EVKLTPWFKI (151 aa)) form the Nudix hydrolase domain. Substrate is bound by residues R70 and K74. C86 is a catalytic residue. S87 is a substrate binding site. Positions 146 and 148 each coordinate Mg(2+). E148 is a catalytic residue. K176 is modified (N6-acetyllysine). The Microbody targeting signal motif lies at 225–227 (HRM).

It belongs to the IPP isomerase type 1 family. Monomer. Requires Mg(2+) as cofactor.

Its subcellular location is the peroxisome. The catalysed reaction is isopentenyl diphosphate = dimethylallyl diphosphate. It participates in isoprenoid biosynthesis; dimethylallyl diphosphate biosynthesis; dimethylallyl diphosphate from isopentenyl diphosphate: step 1/1. Its function is as follows. Catalyzes the 1,3-allylic rearrangement of the homoallylic substrate isopentenyl (IPP) to its highly electrophilic allylic isomer, dimethylallyl diphosphate (DMAPP). The protein is Isopentenyl-diphosphate Delta-isomerase 1 (IDI1) of Mesocricetus auratus (Golden hamster).